The primary structure comprises 420 residues: Cytoplasmic tRNA 2-thiolation protein 1 (420 aa).

Residue Ser-200 is modified to Phosphoserine.

Belongs to the TtcA family. CTU1/NCS6/ATPBD3 subfamily. In terms of assembly, component of a complex at least composed of URM1, CTU2/NCS2 and CTU1/ATPBD3. May form a heterodimer with CTU2/NCS2.

Its subcellular location is the cytoplasm. It participates in tRNA modification; 5-methoxycarbonylmethyl-2-thiouridine-tRNA biosynthesis. Its function is as follows. Plays a central role in 2-thiolation of mcm(5)S(2)U at tRNA wobble positions of tRNA(Lys), tRNA(Glu) and tRNA(Gln). Directly binds tRNAs and probably acts by catalyzing adenylation of tRNAs, an intermediate required for 2-thiolation. It is unclear whether it acts as a sulfurtransferase that transfers sulfur from thiocarboxylated URM1 onto the uridine of tRNAs at wobble position. This is Cytoplasmic tRNA 2-thiolation protein 1 (Ctu1) from Mus musculus (Mouse).